Here is a 290-residue protein sequence, read N- to C-terminus: N-acetylmannosamine kinase (290 aa).

ATP is bound by residues Ala-6–Lys-13 and Gly-132–Leu-139. Zn(2+) is bound by residues His-156, Cys-166, Cys-168, and Cys-173.

It belongs to the ROK (NagC/XylR) family. NanK subfamily. In terms of assembly, homodimer.

The enzyme catalyses an N-acyl-D-mannosamine + ATP = an N-acyl-D-mannosamine 6-phosphate + ADP + H(+). It functions in the pathway amino-sugar metabolism; N-acetylneuraminate degradation; D-fructose 6-phosphate from N-acetylneuraminate: step 2/5. Catalyzes the phosphorylation of N-acetylmannosamine (ManNAc) to ManNAc-6-P. The polypeptide is N-acetylmannosamine kinase (Yersinia pseudotuberculosis serotype O:1b (strain IP 31758)).